The following is a 1436-amino-acid chain: MALGRHLSLRGLCVLLLGTMVGGQALELRLKDGVHRCEGRVEVKHQGEWGTVDGYRWTLKDASVVCRQLGCGAAIGFPGGAYFGPGLGPIWLLYTSCEGTESTVSDCEHSNIKDYRNDGYNHGRDAGVVCSGFVRLAGGDGPCSGRVEVHSGEAWIPVSDGNFTLATAQIICAELGCGKAVSVLGHELFRESSAQVWAEEFRCEGEEPELWVCPRVPCPGGTCHHSGSAQVVCSAYSEVRLMTNGSSQCEGQVEMNISGQWRALCASHWSLANANVICRQLGCGVAISTPGGPHLVEEGDQILTARFHCSGAESFLWSCPVTALGGPDCSHGNTASVICSGNQIQVLPQCNDSVSQPTGSAASEDSAPYCSDSRQLRLVDGGGPCAGRVEILDQGSWGTICDDGWDLDDARVVCRQLGCGEALNATGSAHFGAGSGPIWLDNLNCTGKESHVWRCPSRGWGQHNCRHKQDAGVICSEFLALRMVSEDQQCAGWLEVFYNGTWGSVCRNPMEDITVSTICRQLGCGDSGTLNSSVALREGFRPQWVDRIQCRKTDTSLWQCPSDPWNYNSCSPKEEAYIWCADSRQIRLVDGGGRCSGRVEILDQGSWGTICDDRWDLDDARVVCKQLGCGEALDATVSSFFGTGSGPIWLDEVNCRGEESQVWRCPSWGWRQHNCNHQEDAGVICSGFVRLAGGDGPCSGRVEVHSGEAWTPVSDGNFTLPTAQVICAELGCGKAVSVLGHMPFRESDGQVWAEEFRCDGGEPELWSCPRVPCPGGTCLHSGAAQVVCSVYTEVQLMKNGTSQCEGQVEMKISGRWRALCASHWSLANANVVCRQLGCGVAISTPRGPHLVEGGDQISTAQFHCSGAESFLWSCPVTALGGPDCSHGNTASVICSGNHTQVLPQCNDFLSQPAGSAASEESSPYCSDSRQLRLVDGGGPCGGRVEILDQGSWGTICDDDWDLDDARVVCRQLGCGEALNATGSAHFGAGSGPIWLDDLNCTGKESHVWRCPSRGWGRHDCRHKEDAGVICSEFLALRMVSEDQQCAGWLEVFYNGTWGSVCRSPMEDITVSVICRQLGCGDSGSLNTSVGLREGSRPRWVDLIQCRKMDTSLWQCPSGPWKYSSCSPKEEAYISCEGRRPKSCPTAAACTDREKLRLRGGDSECSGRVEVWHNGSWGTVCDDSWSLAEAEVVCQQLGCGQALEAVRSAAFGPGNGSIWLDEVQCGGRESSLWDCVAEPWGQSDCKHEEDAGVRCSGVRTTLPTTTAGTRTTSNSLPGIFSLPGVLCLILGSLLFLVLVILVTQLLRWRAERRALSSYEDALAEAVYEELDYLLTQKEGLGSPDQMTDVPDENYDDAEEVPVPGTPSPSQGNEEEVPPEKEDGVRSSQTGSFLNFSREAANPGEGEESFWLLQGKKGDAGYDDVELSALGTSPVTFS.

Residues 1 to 25 form the signal peptide; that stretch reads MALGRHLSLRGLCVLLLGTMVGGQA. 3 SRCR domains span residues 28-131, 134-234, and 239-340; these read LRLK…VVCS, VRLA…VVCS, and VRLM…VICS. 2 disulfides stabilise this stretch: cysteine 66–cysteine 130 and cysteine 97–cysteine 107. Residue asparagine 162 is glycosylated (N-linked (GlcNAc...) asparagine). Intrachain disulfides connect cysteine 172-cysteine 233 and cysteine 203-cysteine 213. N-linked (GlcNAc...) asparagine glycosylation is found at asparagine 244 and asparagine 256. 3 disulfides stabilise this stretch: cysteine 265-cysteine 329, cysteine 278-cysteine 339, and cysteine 309-cysteine 319. 3 N-linked (GlcNAc...) asparagine glycosylation sites follow: asparagine 351, asparagine 424, and asparagine 444. SRCR domains lie at 376-476, 481-581, 586-686, 689-789, and 794-895; these read LRLV…VICS, LRMV…IWCA, IRLV…VICS, VRLA…VVCS, and VQLM…VICS. 3 disulfide bridges follow: cysteine 401/cysteine 465, cysteine 414/cysteine 475, and cysteine 445/cysteine 455. N-linked (GlcNAc...) asparagine glycosylation is found at asparagine 499 and asparagine 531. Cystine bridges form between cysteine 506/cysteine 570, cysteine 519/cysteine 580, cysteine 550/cysteine 560, cysteine 611/cysteine 675, cysteine 624/cysteine 685, and cysteine 655/cysteine 665. Residue asparagine 717 is glycosylated (N-linked (GlcNAc...) asparagine). 2 disulfide bridges follow: cysteine 727–cysteine 788 and cysteine 758–cysteine 768. An N-linked (GlcNAc...) asparagine glycan is attached at asparagine 799. 3 disulfide bridges follow: cysteine 820–cysteine 884, cysteine 833–cysteine 894, and cysteine 864–cysteine 874. N-linked (GlcNAc...) asparagine glycosylation is found at asparagine 897, asparagine 979, and asparagine 999. SRCR domains follow at residues 931-1031, 1036-1136, and 1155-1255; these read LRLV…VICS, LRMV…ISCE, and LRLR…VRCS. Cystine bridges form between cysteine 956–cysteine 1020, cysteine 969–cysteine 1030, and cysteine 1000–cysteine 1010. Residues asparagine 1054 and asparagine 1086 are each glycosylated (N-linked (GlcNAc...) asparagine). 3 disulfide bridges follow: cysteine 1061–cysteine 1125, cysteine 1074–cysteine 1135, and cysteine 1105–cysteine 1115. N-linked (GlcNAc...) asparagine glycans are attached at residues asparagine 1173 and asparagine 1214. Intrachain disulfides connect cysteine 1180-cysteine 1244, cysteine 1193-cysteine 1254, and cysteine 1224-cysteine 1234. The disordered stretch occupies residues 1337–1410; sequence EGLGSPDQMT…PGEGEESFWL (74 aa). Acidic residues predominate over residues 1348–1358; that stretch reads VPDENYDDAEE. Polar residues predominate over residues 1384–1393; sequence RSSQTGSFLN. Asparagine 1393 carries an N-linked (GlcNAc...) asparagine glycan.

As to expression, expressed on subsets of CD4-CD8- gamma delta T lymphocytes.

Its subcellular location is the secreted. This is Antigen WC1.1 from Bos taurus (Bovine).